The primary structure comprises 399 residues: 26S proteasome regulatory subunit 10B homolog A (399 aa).

Position 2 is an N-acetylthreonine (T2). Residue 180–187 coordinates ATP; the sequence is GPPGTGKT. Residue K203 forms a Glycyl lysine isopeptide (Lys-Gly) (interchain with G-Cter in ubiquitin) linkage.

It belongs to the AAA ATPase family. As to quaternary structure, component of the 19S regulatory particle (RP/PA700) base subcomplex of the 26S proteasome. The 26S proteasome is composed of a core protease (CP), known as the 20S proteasome, capped at one or both ends by the 19S regulatory particle (RP/PA700). The RP/PA700 complex is composed of at least 17 different subunits in two subcomplexes, the base and the lid, which form the portions proximal and distal to the 20S proteolytic core, respectively.

The protein resides in the cytoplasm. It is found in the nucleus. Functionally, the 26S proteasome is involved in the ATP-dependent degradation of ubiquitinated proteins. The regulatory (or ATPase) complex confers ATP dependency and substrate specificity to the 26S complex. The chain is 26S proteasome regulatory subunit 10B homolog A (RPT4A) from Arabidopsis thaliana (Mouse-ear cress).